The following is a 340-amino-acid chain: Putative Ig-like domain-containing protein C1 (340 aa).

An Ig-like domain is found at 207–294 (PTVTVTGIER…SSPRVMVPTI (88 aa)).

In Sus scrofa (Pig), this protein is Putative Ig-like domain-containing protein C1.